The primary structure comprises 191 residues: MLLLASASPARRRLLEQACIPHRVQVSGVDEDGIHHSEPPQLVCLLAEAKAKAVHGQLTDPSIHAVLGCDSVLAFEGEVFGKPADAEEAKARWRRMRGHWGDLHTGHCLIATSSTTAISSQCQCITTRVLFADLSDAEIDAYVSSGEPLQCAGGFALEGRGGCVVERLNGCYSNVIGLSLPLLRQWLPQDF.

The active-site Proton acceptor is the Asp-70.

This sequence belongs to the Maf family. The cofactor is a divalent metal cation.

The protein resides in the cytoplasm. It catalyses the reaction a ribonucleoside 5'-triphosphate + H2O = a ribonucleoside 5'-phosphate + diphosphate + H(+). It carries out the reaction a 2'-deoxyribonucleoside 5'-triphosphate + H2O = a 2'-deoxyribonucleoside 5'-phosphate + diphosphate + H(+). Functionally, nucleoside triphosphate pyrophosphatase. May have a dual role in cell division arrest and in preventing the incorporation of modified nucleotides into cellular nucleic acids. The sequence is that of Nucleoside triphosphate pyrophosphatase from Synechococcus sp. (strain WH7803).